A 195-amino-acid chain; its full sequence is Cysteine/O-acetylserine efflux protein (195 aa).

5 helical membrane passes run 47 to 67 (SLGF…LAVI), 70 to 90 (AAVH…AWKI), 105 to 125 (ISFW…LYGV), 142 to 162 (VVGV…CWAL), and 177 to 194 (QLNI…VRIF).

It belongs to the Rht family.

It localises to the cell inner membrane. The enzyme catalyses O-acetyl-L-serine(in) = O-acetyl-L-serine(out). It catalyses the reaction L-cysteine(in) = L-cysteine(out). Functionally, exporter of O-acetylserine (OAS) and cysteine. The protein is Cysteine/O-acetylserine efflux protein (eamB) of Shigella boydii serotype 4 (strain Sb227).